Reading from the N-terminus, the 204-residue chain is Large ribosomal subunit protein uL4 (204 aa).

The tract at residues 52-76 is disordered; the sequence is AEVRGGGKKPWAQKGGGRARAGSRR.

This sequence belongs to the universal ribosomal protein uL4 family. In terms of assembly, part of the 50S ribosomal subunit.

Its function is as follows. One of the primary rRNA binding proteins, this protein initially binds near the 5'-end of the 23S rRNA. It is important during the early stages of 50S assembly. It makes multiple contacts with different domains of the 23S rRNA in the assembled 50S subunit and ribosome. Functionally, forms part of the polypeptide exit tunnel. The chain is Large ribosomal subunit protein uL4 from Sulfurimonas denitrificans (strain ATCC 33889 / DSM 1251) (Thiomicrospira denitrificans (strain ATCC 33889 / DSM 1251)).